The sequence spans 778 residues: Endonuclease MutS2 (778 aa).

328–335 (GPNTGGKT) provides a ligand contact to ATP. The Smr domain maps to 702–777 (LDLRGKRYEE…GSGATIVTFK (76 aa)).

The protein belongs to the DNA mismatch repair MutS family. MutS2 subfamily. In terms of assembly, homodimer. Binds to stalled ribosomes, contacting rRNA.

Endonuclease that is involved in the suppression of homologous recombination and thus may have a key role in the control of bacterial genetic diversity. Its function is as follows. Acts as a ribosome collision sensor, splitting the ribosome into its 2 subunits. Detects stalled/collided 70S ribosomes which it binds and splits by an ATP-hydrolysis driven conformational change. Acts upstream of the ribosome quality control system (RQC), a ribosome-associated complex that mediates the extraction of incompletely synthesized nascent chains from stalled ribosomes and their subsequent degradation. Probably generates substrates for RQC. The chain is Endonuclease MutS2 from Streptococcus pneumoniae (strain P1031).